The chain runs to 437 residues: tRNA-2-methylthio-N(6)-dimethylallyladenosine synthase (437 aa).

One can recognise an MTTase N-terminal domain in the interval 1–115; sequence MKVYIETMGC…ISQVIHKEKA (115 aa). Positions 10, 46, 78, 148, 152, and 155 each coordinate [4Fe-4S] cluster. One can recognise a Radical SAM core domain in the interval 134–367; sequence KKAQIRSLLN…QNRHKEILEE (234 aa). Residues 370 to 436 form the TRAM domain; it reads KLEVGKTHVV…KGRLIAAIKG (67 aa).

This sequence belongs to the methylthiotransferase family. MiaB subfamily. Monomer. It depends on [4Fe-4S] cluster as a cofactor.

The protein resides in the cytoplasm. It carries out the reaction N(6)-dimethylallyladenosine(37) in tRNA + (sulfur carrier)-SH + AH2 + 2 S-adenosyl-L-methionine = 2-methylsulfanyl-N(6)-dimethylallyladenosine(37) in tRNA + (sulfur carrier)-H + 5'-deoxyadenosine + L-methionine + A + S-adenosyl-L-homocysteine + 2 H(+). Its function is as follows. Catalyzes the methylthiolation of N6-(dimethylallyl)adenosine (i(6)A), leading to the formation of 2-methylthio-N6-(dimethylallyl)adenosine (ms(2)i(6)A) at position 37 in tRNAs that read codons beginning with uridine. The protein is tRNA-2-methylthio-N(6)-dimethylallyladenosine synthase of Helicobacter pylori (strain P12).